A 190-amino-acid chain; its full sequence is Putative manganese efflux pump MntP (190 aa).

6 consecutive transmembrane segments (helical) span residues 3–23 (MSATLILAFGMSMDAFAASIG), 41–61 (LIFGVIEAITPLIGWALGFFA), 62–82 (SQYILEWDHWVAFTLLLILGG), 105–127 (LALLVCTAIATSLDAMAIGVGLA), 143–163 (ATMIMVTLGMMIGRYIGPILG), and 168–188 (VMGGLVLIGIGCNILYEHLGY).

This sequence belongs to the MntP (TC 9.B.29) family.

Its subcellular location is the cell inner membrane. In terms of biological role, probably functions as a manganese efflux pump. The chain is Putative manganese efflux pump MntP from Pectobacterium carotovorum subsp. carotovorum (strain PC1).